We begin with the raw amino-acid sequence, 297 residues long: Homoserine kinase (297 aa).

Residue 82-92 participates in ATP binding; that stretch reads PVSRGLGSSAA.

This sequence belongs to the GHMP kinase family. Homoserine kinase subfamily.

Its subcellular location is the cytoplasm. The enzyme catalyses L-homoserine + ATP = O-phospho-L-homoserine + ADP + H(+). It functions in the pathway amino-acid biosynthesis; L-threonine biosynthesis; L-threonine from L-aspartate: step 4/5. Functionally, catalyzes the ATP-dependent phosphorylation of L-homoserine to L-homoserine phosphate. The sequence is that of Homoserine kinase from Clostridium botulinum (strain ATCC 19397 / Type A).